Consider the following 64-residue polypeptide: Putative neurotoxin-G (64 aa).

A signal peptide spans 1-19; that stretch reads MFAMVTVTVLLLISSGIFC. Disulfide bonds link C25-C45, C32-C54, and C36-C56.

In terms of tissue distribution, expressed by the venom gland.

The protein resides in the secreted. This chain is Putative neurotoxin-G, found in Lychas mucronatus (Chinese swimming scorpion).